We begin with the raw amino-acid sequence, 401 residues long: Ornithine aminotransferase (401 aa).

N6-(pyridoxal phosphate)lysine is present on lysine 258.

This sequence belongs to the class-III pyridoxal-phosphate-dependent aminotransferase family. OAT subfamily. Pyridoxal 5'-phosphate serves as cofactor.

It is found in the cytoplasm. It carries out the reaction a 2-oxocarboxylate + L-ornithine = L-glutamate 5-semialdehyde + an L-alpha-amino acid. It participates in amino-acid biosynthesis; L-proline biosynthesis; L-glutamate 5-semialdehyde from L-ornithine: step 1/1. Its function is as follows. Catalyzes the interconversion of ornithine to glutamate semialdehyde. The protein is Ornithine aminotransferase of Bacillus subtilis (strain 168).